The sequence spans 616 residues: Dihydroxy-acid dehydratase (616 aa).

Residue aspartate 81 participates in Mg(2+) binding. Residue cysteine 122 participates in [2Fe-2S] cluster binding. Mg(2+) contacts are provided by aspartate 123 and lysine 124. The residue at position 124 (lysine 124) is an N6-carboxylysine. A [2Fe-2S] cluster-binding site is contributed by cysteine 195. Glutamate 491 contacts Mg(2+). Residue serine 517 is the Proton acceptor of the active site.

The protein belongs to the IlvD/Edd family. In terms of assembly, homodimer. Requires [2Fe-2S] cluster as cofactor. Mg(2+) is required as a cofactor.

The enzyme catalyses (2R)-2,3-dihydroxy-3-methylbutanoate = 3-methyl-2-oxobutanoate + H2O. It carries out the reaction (2R,3R)-2,3-dihydroxy-3-methylpentanoate = (S)-3-methyl-2-oxopentanoate + H2O. The protein operates within amino-acid biosynthesis; L-isoleucine biosynthesis; L-isoleucine from 2-oxobutanoate: step 3/4. It participates in amino-acid biosynthesis; L-valine biosynthesis; L-valine from pyruvate: step 3/4. Functions in the biosynthesis of branched-chain amino acids. Catalyzes the dehydration of (2R,3R)-2,3-dihydroxy-3-methylpentanoate (2,3-dihydroxy-3-methylvalerate) into 2-oxo-3-methylpentanoate (2-oxo-3-methylvalerate) and of (2R)-2,3-dihydroxy-3-methylbutanoate (2,3-dihydroxyisovalerate) into 2-oxo-3-methylbutanoate (2-oxoisovalerate), the penultimate precursor to L-isoleucine and L-valine, respectively. In Escherichia coli O127:H6 (strain E2348/69 / EPEC), this protein is Dihydroxy-acid dehydratase.